Consider the following 455-residue polypeptide: Bleomycin hydrolase (455 aa).

The residue at position 1 (methionine 1) is an N-acetylmethionine. Active-site residues include cysteine 73 and histidine 372. An N6-acetyllysine modification is found at lysine 391. Asparagine 396 is a catalytic residue.

Belongs to the peptidase C1 family. In terms of assembly, homohexamer. Interacts with NUDT12 (via ANK repeats).

It localises to the cytoplasm. The protein resides in the cytoplasmic granule. The enzyme catalyses Inactivates bleomycin B2 (a cytotoxic glycometallopeptide) by hydrolysis of a carboxyamide bond of beta-aminoalanine, but also shows general aminopeptidase activity. The specificity varies somewhat with source, but amino acid arylamides of Met, Leu and Ala are preferred.. Functionally, the normal physiological role of BLM hydrolase is unknown, but it catalyzes the inactivation of the antitumor drug BLM (a glycopeptide) by hydrolyzing the carboxamide bond of its B-aminoalaninamide moiety thus protecting normal and malignant cells from BLM toxicity. The polypeptide is Bleomycin hydrolase (Blmh) (Mus musculus (Mouse)).